Consider the following 291-residue polypeptide: MAEIKAAQVMQLRKKSGAGIMDAKKALVASDGDMDKAMDYLREKGIAKAAKKSDRVAAEGLADIAVNGNTAAIVELNSETDFVAASEPFKDLLKKVTKLISENKPANVEEALEIKTENGTLNDDIISTTQKTGEKVSLRRFTVVEKDDGDSFGAYLHQGGQIAALVVLEGADDATAKDVAMHVAAINPEFMTRDDVSQERLDHERAIFKEETLNEGKPEKIVDKIVEGRLNKFLSQICLADQDFVKDSDQTVEQYVSSKNGKLKSFIRYEVGEGIEKKQDDFAQEVKDQMN.

Residues 80–83 (TDFV) are involved in Mg(2+) ion dislocation from EF-Tu.

Belongs to the EF-Ts family.

Its subcellular location is the cytoplasm. Its function is as follows. Associates with the EF-Tu.GDP complex and induces the exchange of GDP to GTP. It remains bound to the aminoacyl-tRNA.EF-Tu.GTP complex up to the GTP hydrolysis stage on the ribosome. In Limosilactobacillus reuteri (strain DSM 20016) (Lactobacillus reuteri), this protein is Elongation factor Ts.